The following is a 420-amino-acid chain: tRNA(Ile)-lysidine synthase, chloroplastic (420 aa).

Ser63–Ser68 provides a ligand contact to ATP.

This sequence belongs to the tRNA(Ile)-lysidine synthase family.

It is found in the plastid. It localises to the chloroplast. The enzyme catalyses cytidine(34) in tRNA(Ile2) + L-lysine + ATP = lysidine(34) in tRNA(Ile2) + AMP + diphosphate + H(+). Ligates lysine onto the cytidine present at position 34 of the AUA codon-specific tRNA(Ile) that contains the anticodon CAU, in an ATP-dependent manner. Cytidine is converted to lysidine, thus changing the amino acid specificity of the tRNA from methionine to isoleucine. This Zygnema circumcarinatum (Green alga) protein is tRNA(Ile)-lysidine synthase, chloroplastic.